Consider the following 148-residue polypeptide: MAVASDFYLRYYVGHKGKFGHEFLEFEFRPDGKLRYANNSNYKNDVMIRKEAYVHKSVMEELKRIIDDSEITKEDDALWPPPDRVGRQELEIVIGDEHISFTTSKIGSLIDVNQSKDPEGLRVFYYLVQDLKCLVFSLIGLHFKIKPI.

Ala2 bears the N-acetylalanine mark.

Belongs to the mago nashi family. As to quaternary structure, component of the pre-catalytic, catalytic and post-catalytic spliceosome complexes. Heterodimer with RBM8A. Core component of the mRNA splicing-dependent exon junction complex (EJC); the core complex contains CASC3, EIF4A3, MAGOH or MAGOHB, and RBM8A. As to expression, ubiquitous.

Its subcellular location is the nucleus. Functionally, required for pre-mRNA splicing as component of the spliceosome. Plays a redundant role with MAGOH in the exon junction complex and in the nonsense-mediated decay (NMD) pathway. The chain is Protein mago nashi homolog 2 (MAGOHB) from Homo sapiens (Human).